The following is a 341-amino-acid chain: UDP-3-O-acylglucosamine N-acyltransferase (341 aa).

The active-site Proton acceptor is His-239.

The protein belongs to the transferase hexapeptide repeat family. LpxD subfamily. In terms of assembly, homotrimer.

It carries out the reaction a UDP-3-O-[(3R)-3-hydroxyacyl]-alpha-D-glucosamine + a (3R)-hydroxyacyl-[ACP] = a UDP-2-N,3-O-bis[(3R)-3-hydroxyacyl]-alpha-D-glucosamine + holo-[ACP] + H(+). It participates in bacterial outer membrane biogenesis; LPS lipid A biosynthesis. Catalyzes the N-acylation of UDP-3-O-acylglucosamine using 3-hydroxyacyl-ACP as the acyl donor. Is involved in the biosynthesis of lipid A, a phosphorylated glycolipid that anchors the lipopolysaccharide to the outer membrane of the cell. The polypeptide is UDP-3-O-acylglucosamine N-acyltransferase (Shewanella oneidensis (strain ATCC 700550 / JCM 31522 / CIP 106686 / LMG 19005 / NCIMB 14063 / MR-1)).